The sequence spans 132 residues: Neurophysin 2 (132 aa).

Intrachain disulfides connect cysteine 10–cysteine 54, cysteine 13–cysteine 27, cysteine 21–cysteine 44, cysteine 28–cysteine 34, cysteine 61–cysteine 73, cysteine 67–cysteine 85, and cysteine 74–cysteine 79.

This sequence belongs to the vasopressin/oxytocin family.

It is found in the secreted. Its function is as follows. Neurophysin 2 specifically binds vasopressin. The chain is Neurophysin 2 from Struthio camelus (Common ostrich).